The chain runs to 56 residues: Large ribosomal subunit protein bL32 (56 aa).

Over residues 1 to 19 (MAVPKRKKSRSTTRHRRAQ) the composition is skewed to basic residues. The interval 1–22 (MAVPKRKKSRSTTRHRRAQWKT) is disordered.

Belongs to the bacterial ribosomal protein bL32 family.

The protein is Large ribosomal subunit protein bL32 of Cutibacterium acnes (strain DSM 16379 / KPA171202) (Propionibacterium acnes).